The sequence spans 145 residues: D-aminoacyl-tRNA deacylase (145 aa).

Positions 137 to 138 (GP) match the Gly-cisPro motif, important for rejection of L-amino acids motif.

It belongs to the DTD family. In terms of assembly, homodimer.

It localises to the cytoplasm. It carries out the reaction glycyl-tRNA(Ala) + H2O = tRNA(Ala) + glycine + H(+). The enzyme catalyses a D-aminoacyl-tRNA + H2O = a tRNA + a D-alpha-amino acid + H(+). In terms of biological role, an aminoacyl-tRNA editing enzyme that deacylates mischarged D-aminoacyl-tRNAs. Also deacylates mischarged glycyl-tRNA(Ala), protecting cells against glycine mischarging by AlaRS. Acts via tRNA-based rather than protein-based catalysis; rejects L-amino acids rather than detecting D-amino acids in the active site. By recycling D-aminoacyl-tRNA to D-amino acids and free tRNA molecules, this enzyme counteracts the toxicity associated with the formation of D-aminoacyl-tRNA entities in vivo and helps enforce protein L-homochirality. The protein is D-aminoacyl-tRNA deacylase of Brevibacillus brevis (strain 47 / JCM 6285 / NBRC 100599).